We begin with the raw amino-acid sequence, 319 residues long: uncharacterized protein (319 aa).

The helical transmembrane segment at Ala-270–Gly-290 threads the bilayer.

The protein localises to the membrane. This is an uncharacterized protein from Mycobacterium tuberculosis (strain CDC 1551 / Oshkosh).